The primary structure comprises 182 residues: Adenine phosphoribosyltransferase (182 aa).

The protein belongs to the purine/pyrimidine phosphoribosyltransferase family. As to quaternary structure, homodimer.

The protein resides in the cytoplasm. It catalyses the reaction AMP + diphosphate = 5-phospho-alpha-D-ribose 1-diphosphate + adenine. It participates in purine metabolism; AMP biosynthesis via salvage pathway; AMP from adenine: step 1/1. Catalyzes a salvage reaction resulting in the formation of AMP, that is energically less costly than de novo synthesis. In Pseudomonas entomophila (strain L48), this protein is Adenine phosphoribosyltransferase.